The sequence spans 69 residues: DNA-directed RNA polymerase subunit omega (69 aa).

The protein belongs to the RNA polymerase subunit omega family. In terms of assembly, the RNAP catalytic core consists of 2 alpha, 1 beta, 1 beta' and 1 omega subunit. When a sigma factor is associated with the core the holoenzyme is formed, which can initiate transcription.

The catalysed reaction is RNA(n) + a ribonucleoside 5'-triphosphate = RNA(n+1) + diphosphate. Functionally, promotes RNA polymerase assembly. Latches the N- and C-terminal regions of the beta' subunit thereby facilitating its interaction with the beta and alpha subunits. The polypeptide is DNA-directed RNA polymerase subunit omega (Symbiobacterium thermophilum (strain DSM 24528 / JCM 14929 / IAM 14863 / T)).